The following is a 538-amino-acid chain: Putative cysteine ligase BshC (538 aa).

The stretch at 460–484 forms a coiled coil; the sequence is KINEQIELLERMLKRNVEKKHEVEL.

The protein belongs to the BshC family.

Its function is as follows. Involved in bacillithiol (BSH) biosynthesis. May catalyze the last step of the pathway, the addition of cysteine to glucosamine malate (GlcN-Mal) to generate BSH. In Bacillus cereus (strain AH820), this protein is Putative cysteine ligase BshC.